We begin with the raw amino-acid sequence, 542 residues long: MTRYIFVTGGVVSSLGKGIASASLAAILEARGLKVTMLKLDPYINVDPGTMSPFQHGEVFVTHDGAETDLDLGHYERFIRTTMTQNNNFTTGRIYEHVLRKERRGDYLGATIQVIPHITDEIKRRIIKGAGDADVALVEIGGTVGDIESQPFLEAIRQLRVEVGSKRAMLMHLTLVPYIATAGETKTKPTQHSVKELRSIGLQPDVLICRSDHPVDASSRRKIALFTNVEERAVISLEDVDTIYKIPGVLHAQGLDDFVVERFGLQCNGADLSEWDKVVDAKLNPEHEVTIAMVGKYMELLDAYKSLIEAMSHAGITNRTKVNLRYIDSEDIENQGTSLLEGADAILVPGGFGLRGVEGKITAVQYARENKVPYLGICLGMQVAVIEFARNVMGWKDANSTEFDRNSGHPVVGLITEWADATGAVETRDEASDLGGTMRLGAQDCQLAAGSKVHDCYGKDVITERHRHRYEVNNNLLPQLVDAGLVVSGRSEDGALVEVVESKDHPWFVACQFHPEFTSTPRDGHPLFSGFVKAALAQKNKA.

The tract at residues 1 to 265 is amidoligase domain; the sequence is MTRYIFVTGG…DDFVVERFGL (265 aa). Residue Ser13 participates in CTP binding. Ser13 serves as a coordination point for UTP. Residues 14–19 and Asp71 contribute to the ATP site; that span reads SLGKGI. Mg(2+) contacts are provided by Asp71 and Glu139. CTP contacts are provided by residues 146–148, 186–191, and Lys222; these read DIE and KTKPTQ. UTP is bound by residues 186-191 and Lys222; that span reads KTKPTQ. Residues 290–541 enclose the Glutamine amidotransferase type-1 domain; the sequence is TIAMVGKYME…VKAALAQKNK (252 aa). Residue Gly351 participates in L-glutamine binding. Cys378 functions as the Nucleophile; for glutamine hydrolysis in the catalytic mechanism. L-glutamine contacts are provided by residues 379 to 382, Glu402, and Arg469; that span reads LGMQ. Active-site residues include His514 and Glu516.

Belongs to the CTP synthase family. Homotetramer.

It carries out the reaction UTP + L-glutamine + ATP + H2O = CTP + L-glutamate + ADP + phosphate + 2 H(+). It catalyses the reaction L-glutamine + H2O = L-glutamate + NH4(+). The catalysed reaction is UTP + NH4(+) + ATP = CTP + ADP + phosphate + 2 H(+). It functions in the pathway pyrimidine metabolism; CTP biosynthesis via de novo pathway; CTP from UDP: step 2/2. Allosterically activated by GTP, when glutamine is the substrate; GTP has no effect on the reaction when ammonia is the substrate. The allosteric effector GTP functions by stabilizing the protein conformation that binds the tetrahedral intermediate(s) formed during glutamine hydrolysis. Inhibited by the product CTP, via allosteric rather than competitive inhibition. In terms of biological role, catalyzes the ATP-dependent amination of UTP to CTP with either L-glutamine or ammonia as the source of nitrogen. Regulates intracellular CTP levels through interactions with the four ribonucleotide triphosphates. This Pseudomonas putida (strain GB-1) protein is CTP synthase.